We begin with the raw amino-acid sequence, 475 residues long: 3-isopropylmalate dehydratase large subunit (475 aa).

3 residues coordinate [4Fe-4S] cluster: Cys-353, Cys-414, and Cys-417.

This sequence belongs to the aconitase/IPM isomerase family. LeuC type 1 subfamily. Heterodimer of LeuC and LeuD. It depends on [4Fe-4S] cluster as a cofactor.

The catalysed reaction is (2R,3S)-3-isopropylmalate = (2S)-2-isopropylmalate. It functions in the pathway amino-acid biosynthesis; L-leucine biosynthesis; L-leucine from 3-methyl-2-oxobutanoate: step 2/4. Catalyzes the isomerization between 2-isopropylmalate and 3-isopropylmalate, via the formation of 2-isopropylmaleate. The chain is 3-isopropylmalate dehydratase large subunit from Stutzerimonas stutzeri (strain A1501) (Pseudomonas stutzeri).